The primary structure comprises 149 residues: Calmodulin-1 (149 aa).

An N-acetylalanine modification is found at Ala-2. EF-hand domains follow at residues 8 to 43 (EQIA…LGQN), 44 to 79 (PTEA…KMKD), 81 to 116 (DSEE…LGEK), and 117 to 149 (LTDE…MTSK). Residues Asp-21, Asp-23, Asp-25, Thr-27, Glu-32, Asp-57, Asp-59, Asn-61, Thr-63, Glu-68, Asp-94, Asp-96, Asn-98, and Glu-105 each contribute to the Ca(2+) site. Lys-116 bears the N6,N6,N6-trimethyllysine mark. The Ca(2+) site is built by Asp-130, Asp-132, Asp-134, Gln-136, and Glu-141.

It belongs to the calmodulin family.

In terms of biological role, calmodulin mediates the control of a large number of enzymes, ion channels and other proteins by Ca(2+). Among the enzymes to be stimulated by the calmodulin-Ca(2+) complex are a number of protein kinases and phosphatases. In Branchiostoma floridae (Florida lancelet), this protein is Calmodulin-1.